We begin with the raw amino-acid sequence, 208 residues long: Large ribosomal subunit protein uL3 (208 aa).

The protein belongs to the universal ribosomal protein uL3 family. Part of the 50S ribosomal subunit. Forms a cluster with proteins L14 and L19.

Functionally, one of the primary rRNA binding proteins, it binds directly near the 3'-end of the 23S rRNA, where it nucleates assembly of the 50S subunit. This chain is Large ribosomal subunit protein uL3, found in Desulfosudis oleivorans (strain DSM 6200 / JCM 39069 / Hxd3) (Desulfococcus oleovorans).